The sequence spans 261 residues: MSRKPLIAGNWKMNLNHFEAIALVQKIAFSLPDKYYDKVDVTVIPPFTDLRSVQTLVDGDKLRLTYGGQDLSQHDSGAYTGDISGAFLAKLGCSFVVVGHSERRTYHNEDDALVAAKAAAALKHDLTPIVCIGEHLDVREAGNHVAHNVEQLRGSLSGLSAEQISKVVIAYEPVWAIGTGRVAGAADAQEVCAAIRSELGSLASPQIADAVRVLYGGSVNAKNIGELIAQADVDGGLVGGASLDGEQFATLAAIAAGGPLP.

10–12 (NWK) lines the substrate pocket. The active-site Electrophile is H100. Catalysis depends on E172, which acts as the Proton acceptor. Substrate-binding positions include G178, S218, and 239–240 (GG).

It belongs to the triosephosphate isomerase family. As to quaternary structure, homodimer.

The protein localises to the cytoplasm. It catalyses the reaction D-glyceraldehyde 3-phosphate = dihydroxyacetone phosphate. Its pathway is carbohydrate biosynthesis; gluconeogenesis. It functions in the pathway carbohydrate degradation; glycolysis; D-glyceraldehyde 3-phosphate from glycerone phosphate: step 1/1. Its function is as follows. Involved in the gluconeogenesis. Catalyzes stereospecifically the conversion of dihydroxyacetone phosphate (DHAP) to D-glyceraldehyde-3-phosphate (G3P). The polypeptide is Triosephosphate isomerase (Mycobacterium marinum (strain ATCC BAA-535 / M)).